A 406-amino-acid polypeptide reads, in one-letter code: Imidazolonepropionase (406 aa).

The Fe(3+) site is built by His-72 and His-74. The Zn(2+) site is built by His-72 and His-74. 3 residues coordinate 4-imidazolone-5-propanoate: Arg-81, Tyr-144, and His-177. Tyr-144 is an N-formimidoyl-L-glutamate binding site. His-242 is a binding site for Fe(3+). His-242 provides a ligand contact to Zn(2+). Residue Gln-245 coordinates 4-imidazolone-5-propanoate. Asp-317 lines the Fe(3+) pocket. Zn(2+) is bound at residue Asp-317. N-formimidoyl-L-glutamate is bound by residues Asn-319 and Gly-321. Position 322 (Thr-322) interacts with 4-imidazolone-5-propanoate.

Belongs to the metallo-dependent hydrolases superfamily. HutI family. Zn(2+) serves as cofactor. It depends on Fe(3+) as a cofactor.

The protein localises to the cytoplasm. It carries out the reaction 4-imidazolone-5-propanoate + H2O = N-formimidoyl-L-glutamate. The protein operates within amino-acid degradation; L-histidine degradation into L-glutamate; N-formimidoyl-L-glutamate from L-histidine: step 3/3. Catalyzes the hydrolytic cleavage of the carbon-nitrogen bond in imidazolone-5-propanoate to yield N-formimidoyl-L-glutamate. It is the third step in the universal histidine degradation pathway. The polypeptide is Imidazolonepropionase (Yersinia pseudotuberculosis serotype O:1b (strain IP 31758)).